The chain runs to 2628 residues: Protein FMP27, mitochondrial (2628 aa).

An N-terminal signal peptide occupies residues 1 to 28 (MMFPINVLLYKWLIFAVTFLWSCKILLR). The tract at residues 29–192 (KLLGINITWI…NTNLLIGEIM (164 aa)) is transmembrane domain. LRR repeat units lie at residues 160 to 182 (FDSF…IFIV), 213 to 236 (PMNL…KLLQ), 271 to 296 (IKPL…NHPE), 306 to 333 (YNVL…IFEE), 571 to 596 (NADI…LVHN), 835 to 857 (VVSL…IFGH), 1944 to 1967 (FDSL…FFIF), 2101 to 2125 (FFML…IFLK), and 2303 to 2327 (IGKL…ILRK).

It localises to the cell membrane. The protein resides in the endoplasmic reticulum membrane. The protein localises to the mitochondrion membrane. Its function is as follows. Tube-forming lipid transport protein which binds to phosphatidylinositols and affects phosphatidylinositol-4,5-bisphosphate (PtdIns-4,5-P2) distribution. This Saccharomyces cerevisiae (strain ATCC 204508 / S288c) (Baker's yeast) protein is Protein FMP27, mitochondrial.